A 207-amino-acid chain; its full sequence is Small ribosomal subunit protein uS5 (207 aa).

Residues 1–51 (MTDTPTKQEITSKNDKVPGAIPGEQKKNNRNNDRKRNRRGDSKNLERDSDW) form a disordered region. The span at 24–51 (EQKKNNRNNDRKRNRRGDSKNLERDSDW) shows a compositional bias: basic and acidic residues. An S5 DRBM domain is found at 51 to 114 (WQERVVQIRR…SDGKKNLVRV (64 aa)).

The protein belongs to the universal ribosomal protein uS5 family. In terms of assembly, part of the 30S ribosomal subunit. Contacts proteins S4 and S8.

Its function is as follows. With S4 and S12 plays an important role in translational accuracy. Located at the back of the 30S subunit body where it stabilizes the conformation of the head with respect to the body. The chain is Small ribosomal subunit protein uS5 from Prochlorococcus marinus (strain MIT 9312).